The primary structure comprises 481 residues: Dual specificity protein kinase CLK4 (481 aa).

Disordered regions lie at residues 1-47 (MRHS…KPHH) and 102-143 (SKSS…EDDE). The segment covering 8–19 (HCPDWDSRESWG) has biased composition (basic and acidic residues). Composition is skewed to basic residues over residues 106–119 (VRSR…KRNR) and 126–136 (SHSKSHRRKRS). Serine 136 and serine 138 each carry phosphoserine. One can recognise a Protein kinase domain in the interval 159-475 (YEIVDTLGEG…LDEALQHPFF (317 aa)). ATP is bound by residues 165–173 (LGEGAFGKV) and lysine 189. Catalysis depends on aspartate 286, which acts as the Proton acceptor.

This sequence belongs to the protein kinase superfamily. CMGC Ser/Thr protein kinase family. Lammer subfamily. Interacts with UBL5. In terms of processing, autophosphorylates on all three types of residues. In terms of tissue distribution, expressed in the hippocampus, the cerebellum and the olfactory bulb.

The protein localises to the nucleus. It catalyses the reaction L-seryl-[protein] + ATP = O-phospho-L-seryl-[protein] + ADP + H(+). The catalysed reaction is L-threonyl-[protein] + ATP = O-phospho-L-threonyl-[protein] + ADP + H(+). It carries out the reaction L-tyrosyl-[protein] + ATP = O-phospho-L-tyrosyl-[protein] + ADP + H(+). TG003 inhibits its kinase activity and affects the regulation of alternative splicing mediated by phosphorylation of SR proteins. Its function is as follows. Dual specificity kinase acting on both serine/threonine and tyrosine-containing substrates. Phosphorylates serine- and arginine-rich (SR) proteins of the spliceosomal complex and may be a constituent of a network of regulatory mechanisms that enable SR proteins to control RNA splicing. Phosphorylates SRSF1 and SRSF3. Required for the regulation of alternative splicing of MAPT/TAU. Regulates the alternative splicing of tissue factor (F3) pre-mRNA in endothelial cells. The sequence is that of Dual specificity protein kinase CLK4 (Clk4) from Mus musculus (Mouse).